Reading from the N-terminus, the 154-residue chain is Transcriptional repressor NrdR (154 aa).

A zinc finger lies at 3–34 (CPFCRHPDSRVVDSREADEGQAIRRRRSCPEC). The ATP-cone domain occupies 46–136 (LSVVKRSGVT…VYRSFSSAED (91 aa)).

It belongs to the NrdR family. The cofactor is Zn(2+).

Its function is as follows. Negatively regulates transcription of bacterial ribonucleotide reductase nrd genes and operons by binding to NrdR-boxes. This chain is Transcriptional repressor NrdR, found in Rhodococcus jostii (strain RHA1).